The primary structure comprises 145 residues: 3-hydroxyacyl-[acyl-carrier-protein] dehydratase FabZ (145 aa).

H51 is a catalytic residue.

The protein belongs to the thioester dehydratase family. FabZ subfamily.

The protein localises to the cytoplasm. The catalysed reaction is a (3R)-hydroxyacyl-[ACP] = a (2E)-enoyl-[ACP] + H2O. Functionally, involved in unsaturated fatty acids biosynthesis. Catalyzes the dehydration of short chain beta-hydroxyacyl-ACPs and long chain saturated and unsaturated beta-hydroxyacyl-ACPs. This Staphylococcus saprophyticus subsp. saprophyticus (strain ATCC 15305 / DSM 20229 / NCIMB 8711 / NCTC 7292 / S-41) protein is 3-hydroxyacyl-[acyl-carrier-protein] dehydratase FabZ.